The sequence spans 175 residues: Inorganic pyrophosphatase (175 aa).

Residues lysine 30, arginine 44, and tyrosine 56 each contribute to the substrate site. Positions 66, 71, and 103 each coordinate Mg(2+). Residue tyrosine 142 participates in substrate binding.

The protein belongs to the PPase family. In terms of assembly, homohexamer. Requires Mg(2+) as cofactor.

The protein resides in the cytoplasm. It carries out the reaction diphosphate + H2O = 2 phosphate + H(+). In terms of biological role, catalyzes the hydrolysis of inorganic pyrophosphate (PPi) forming two phosphate ions. In Buchnera aphidicola subsp. Baizongia pistaciae (strain Bp), this protein is Inorganic pyrophosphatase.